Reading from the N-terminus, the 298-residue chain is Probable endonuclease 4 (298 aa).

Zn(2+)-binding residues include His-69, His-111, Glu-146, Asp-180, His-183, His-215, Asp-228, His-230, and Glu-260.

The protein belongs to the AP endonuclease 2 family. Zn(2+) serves as cofactor.

The catalysed reaction is Endonucleolytic cleavage to 5'-phosphooligonucleotide end-products.. Functionally, endonuclease IV plays a role in DNA repair. It cleaves phosphodiester bonds at apurinic or apyrimidinic (AP) sites, generating a 3'-hydroxyl group and a 5'-terminal sugar phosphate. This Bacillus cytotoxicus (strain DSM 22905 / CIP 110041 / 391-98 / NVH 391-98) protein is Probable endonuclease 4.